The following is a 564-amino-acid chain: MTDSVSKAVARTIRAPHGSELHCANWLIEAAYRMIQNNLDPDVAERPEDLVVYGGIGKAARNWACFEQILRSLQALQPEETLLVQSGKPVGVFRTHADAPRVLIANSNLVPHWATWDHFHELDKAGLMMYGQMTAGSWIYIGAQGIVQGTFETFVEAGRKHYNGDLTGKWILTAGLGGMGGAQPLAGVLAGACVLAVECQESRIDFRLRTRYLDHKAFSVDEALAIIDKACKEKRAISVGLLGNAAEILPELVQRAKAGGMKPDIVTDQTSAHDPINGYLPAGWDLARWESSRQSDPKAVEKAARASMAVHVQAMLDFCHMGIPTVDYGNNIRQVALDEGVKNAFDFPGFVPAYIRPLFCEGKGPFRWVALSGDPEDIYKTDAKLKALFPEHTNLHRWLDMAQERIAFQGLPARICWLGLGERHLAGLAFNEMVRNGELKAPVVIGRDHLDCGSVASPNRETEAMMDGSDAVSDWPLLNALLNTAGGATWVSLHHGGGVGMGFSQHAGVVIVADGTAEADARLSRVLWNDPATGVMRHADAGYEVARDCARRHELTLPMAKELP.

NAD(+)-binding positions include 54 to 55, glutamine 132, 178 to 180, glutamate 198, arginine 203, 244 to 245, 269 to 273, 279 to 280, and tyrosine 328; these read GG, GMG, NA, QTSAH, and YL. The active site involves cysteine 416. Residue glycine 498 participates in NAD(+) binding.

It belongs to the urocanase family. In terms of assembly, homodimer. It depends on NAD(+) as a cofactor.

It carries out the reaction 4-imidazolone-5-propanoate = trans-urocanate + H2O. It functions in the pathway amino-acid degradation; L-histidine degradation into L-glutamate; N-formimidoyl-L-glutamate from L-histidine: step 2/3. The polypeptide is Urocanate hydratase (Trifolium repens (Creeping white clover)).